Reading from the N-terminus, the 280-residue chain is Four and a half LIM domains protein 3 (280 aa).

At serine 2 the chain carries N-acetylserine. The C4-type zinc-finger motif lies at 7–31; that stretch reads CAKCSESLYGRKYIQTDDGPYCVPC. 2 consecutive LIM zinc-binding domains span residues 40 to 92 and 101 to 153; these read CAEC…CNDC and CSAC…CVPC. The residue at position 157 (lysine 157) is an N6-acetyllysine. 2 LIM zinc-binding domains span residues 162-212 and 221-275; these read CARC…CVTC and CSSC…CQGC. N6-acetyllysine is present on lysine 235.

As to quaternary structure, interacts with SOX15; the interaction recruits FHL3 to FOXK1 promoters where it acts as a transcriptional coactivator of FOXK1.

It localises to the nucleus. The protein resides in the cytoplasm. Functionally, recruited by SOX15 to FOXK1 promoters where it acts as a transcriptional coactivator of FOXK1. This chain is Four and a half LIM domains protein 3 (FHL3), found in Bos taurus (Bovine).